Here is a 470-residue protein sequence, read N- to C-terminus: N amino acid transport system protein (470 aa).

Residues 1 to 11 (MDSQYETKKND) are compositionally biased toward basic and acidic residues. The tract at residues 1 to 21 (MDSQYETKKNDPNAIMPYPES) is disordered. At 1-56 (MDSQYETKKNDPNAIMPYPESNDEHVGEVRGLGGGIMDKEPEAQEGHAKFHRLGWK) the chain is on the extracellular side. Transmembrane regions (helical) follow at residues 57–77 (RLTVVLIVEAIALGSLSLPGA) and 78–98 (FATLGMVPGVILSVGMGLICI). At 99–131 (YTAHVIGQTKLKHPEIAHYADVGRVMFGRWGYE) the chain is on the extracellular side. Residues 132–152 (IISFMFVLQLIFIVGSHVLTG) traverse the membrane as a helical segment. Residues 153–168 (TIMWGTITDNGNGTCS) lie on the Cytoplasmic side of the membrane. 2 helical membrane passes run 169 to 189 (LVFGIVSAIILFLLAIPPSFA) and 191 to 211 (VAILGYIDFVSICAAILITMI). Topologically, residues 212–236 (ATGIRSSHQEGGLAAVPWSCWPKED) are cytoplasmic. A helical transmembrane segment spans residues 237–257 (LSLAEGFIAVSNIVFAYSFAM). The Extracellular portion of the chain corresponds to 258-275 (CQFSFMDEMHTPSDYKKS). A helical transmembrane segment spans residues 276-296 (IVALGLIEIFIYTVTGGVVYA). At 297–316 (FVGPEVQSPALLSAGPLLAK) the chain is on the cytoplasmic side. The helical transmembrane segment at 317–337 (VAFGIALPVIFISGSINTVVV) threads the bilayer. The Extracellular segment spans residues 338 to 357 (SRYLIERIWPNNVIRYVNTP). A helical membrane pass occupies residues 358 to 378 (AGWMVWLGFDFGITLIAWVIA). Over 379–386 (EAIPFFSD) the chain is Cytoplasmic. Residues 387–407 (LLAICSALFISGFSFYFPALM) form a helical membrane-spanning segment. At 408 to 427 (YFKITRNDAKSQGKKYFLDA) the chain is on the extracellular side. The helical transmembrane segment at 428 to 448 (LNMLCFVIGMGILGIGTYAAI) threads the bilayer. At 449–470 (QDIMDRYDHGKVSKPYSCAPLA) the chain is on the cytoplasmic side.

Belongs to the amino acid/polyamine transporter 2 family.

It is found in the membrane. In terms of biological role, required for the transport of neutral aliphatic and aromatic amino acids via the N system. This Neurospora crassa (strain ATCC 24698 / 74-OR23-1A / CBS 708.71 / DSM 1257 / FGSC 987) protein is N amino acid transport system protein (mtr).